The following is a 498-amino-acid chain: MASQGTKRSYEQMETDGERQNATEIRASVGKMIDGIGRFYIQMCTELKLSDYEGRLIQNSLTIERMVLSAFDERRNRYLEEHPSAGKDPKKTGGPIYKRVDGKWMRELVLYDKEEIRRIWRQANNGDDATAGLTHMMIWHSNLNDTTYQRTRALVRTGMDPRMCSLMQGSTLPRRSGAAGAAVKGIGTMVMELIRMIKRGINDRNFWRGENGRKTRSAYERMCNILKGKFQTAAQRAMMDQVRESRNPGNAEIEDLIFSARSALILRGSVAHKSCLPACVYGPAVASGYDFEKEGYSLVGIDPFKLLQNSQVYSLIRPNENPAHKSQLVWMACHSAAFEDLRLLSFIRGTKVSPRGKLSTRGVQIASNENMDTMESSTLELRSRYWAIRTRSGGNTNQQRASAGQISVQPTFSVQRNLPFDKSTIMAAFTGNTEGRTSDMRAEIIRMMEGAKPEEVSFRGRGVFELSDEKATNPIVPSFDMSNEGSYFFGDNAEEYDN.

A Unconventional nuclear localization signal motif is present at residues 1-18 (MASQGTKRSYEQMETDGE). Residues 1–21 (MASQGTKRSYEQMETDGERQN) are disordered. Residues 8-21 (RSYEQMETDGERQN) are compositionally biased toward basic and acidic residues. Positions 198 to 216 (KRGINDRNFWRGENGRKTR) match the Bipartite nuclear localization signal motif.

Belongs to the influenza viruses nucleoprotein family. In terms of assembly, homomultimerizes to form the nucleocapsid. May bind host exportin-1/XPO1. Binds to viral genomic RNA. Protein-RNA contacts are mediated by a combination of electrostatic interactions between positively charged residues and the phosphate backbone and planar interactions between aromatic side chains and bases. In terms of processing, late in virus-infected cells, may be cleaved from a 56-kDa protein to a 53-kDa protein by a cellular caspase. This cleavage might be a marker for the onset of apoptosis in infected cells or have a specific function in virus host interaction.

Its subcellular location is the virion. The protein resides in the host nucleus. Its function is as follows. Encapsidates the negative strand viral RNA, protecting it from nucleases. The encapsidated genomic RNA is termed the ribonucleoprotein (RNP) and serves as template for transcription and replication. The RNP needs to be localized in the host nucleus to start an infectious cycle, but is too large to diffuse through the nuclear pore complex. NP comprises at least 2 nuclear localization signals that are responsible for the active RNP import into the nucleus through cellular importin alpha/beta pathway. Later in the infection, nclear export of RNPs are mediated through viral proteins NEP interacting with M1 which binds nucleoproteins. It is possible that nucleoprotein binds directly host exportin-1/XPO1 and plays an active role in RNPs nuclear export. M1 interaction with RNP seems to hide nucleoprotein's nuclear localization signals. Soon after a virion infects a new cell, M1 dissociates from the RNP under acidification of the virion driven by M2 protein. Dissociation of M1 from RNP unmasks nucleoprotein's nuclear localization signals, targeting the RNP to the nucleus. This is Nucleoprotein from Influenza A virus (strain A/Memphis/18/1978 H3N2).